A 436-amino-acid polypeptide reads, in one-letter code: Histidinol dehydrogenase (436 aa).

The NAD(+) site is built by Tyr-130, Gln-191, and Asn-214. Substrate-binding residues include Ser-237, Gln-259, and His-262. Zn(2+) is bound by residues Gln-259 and His-262. Catalysis depends on proton acceptor residues Glu-327 and His-328. His-328, Asp-361, Glu-415, and His-420 together coordinate substrate. A Zn(2+)-binding site is contributed by Asp-361. His-420 lines the Zn(2+) pocket.

This sequence belongs to the histidinol dehydrogenase family. Zn(2+) is required as a cofactor.

It carries out the reaction L-histidinol + 2 NAD(+) + H2O = L-histidine + 2 NADH + 3 H(+). It functions in the pathway amino-acid biosynthesis; L-histidine biosynthesis; L-histidine from 5-phospho-alpha-D-ribose 1-diphosphate: step 9/9. Functionally, catalyzes the sequential NAD-dependent oxidations of L-histidinol to L-histidinaldehyde and then to L-histidine. The polypeptide is Histidinol dehydrogenase (Geobacter metallireducens (strain ATCC 53774 / DSM 7210 / GS-15)).